The chain runs to 526 residues: Phosphoenolpyruvate carboxylase (526 aa).

Belongs to the PEPCase type 2 family. As to quaternary structure, homotetramer. It depends on Mg(2+) as a cofactor.

It catalyses the reaction oxaloacetate + phosphate = phosphoenolpyruvate + hydrogencarbonate. Catalyzes the irreversible beta-carboxylation of phosphoenolpyruvate (PEP) to form oxaloacetate (OAA), a four-carbon dicarboxylic acid source for the tricarboxylic acid cycle. The sequence is that of Phosphoenolpyruvate carboxylase from Methanosarcina mazei (strain ATCC BAA-159 / DSM 3647 / Goe1 / Go1 / JCM 11833 / OCM 88) (Methanosarcina frisia).